We begin with the raw amino-acid sequence, 117 residues long: Large ribosomal subunit protein uL18 (117 aa).

Belongs to the universal ribosomal protein uL18 family. As to quaternary structure, part of the 50S ribosomal subunit; part of the 5S rRNA/L5/L18/L25 subcomplex. Contacts the 5S and 23S rRNAs.

Its function is as follows. This is one of the proteins that bind and probably mediate the attachment of the 5S RNA into the large ribosomal subunit, where it forms part of the central protuberance. This is Large ribosomal subunit protein uL18 from Pasteurella multocida (strain Pm70).